A 304-amino-acid polypeptide reads, in one-letter code: Lipoyl synthase (304 aa).

[4Fe-4S] cluster is bound by residues C41, C46, C52, C68, C72, C75, and S281. A Radical SAM core domain is found at 54-270 (GARRTATFMI…RKIAMEKGFK (217 aa)). The interval 282–304 (YHADEQVNEAAKEKQRQGEEQLN) is disordered.

Belongs to the radical SAM superfamily. Lipoyl synthase family. Requires [4Fe-4S] cluster as cofactor.

It localises to the cytoplasm. It carries out the reaction [[Fe-S] cluster scaffold protein carrying a second [4Fe-4S](2+) cluster] + N(6)-octanoyl-L-lysyl-[protein] + 2 oxidized [2Fe-2S]-[ferredoxin] + 2 S-adenosyl-L-methionine + 4 H(+) = [[Fe-S] cluster scaffold protein] + N(6)-[(R)-dihydrolipoyl]-L-lysyl-[protein] + 4 Fe(3+) + 2 hydrogen sulfide + 2 5'-deoxyadenosine + 2 L-methionine + 2 reduced [2Fe-2S]-[ferredoxin]. It participates in protein modification; protein lipoylation via endogenous pathway; protein N(6)-(lipoyl)lysine from octanoyl-[acyl-carrier-protein]. Catalyzes the radical-mediated insertion of two sulfur atoms into the C-6 and C-8 positions of the octanoyl moiety bound to the lipoyl domains of lipoate-dependent enzymes, thereby converting the octanoylated domains into lipoylated derivatives. The polypeptide is Lipoyl synthase (Staphylococcus epidermidis (strain ATCC 35984 / DSM 28319 / BCRC 17069 / CCUG 31568 / BM 3577 / RP62A)).